Reading from the N-terminus, the 390-residue chain is O-glycoside alpha-1,2-mannosyltransferase omh1 (390 aa).

Glutamate 279 serves as the catalytic Nucleophile.

Belongs to the glycosyltransferase 15 family.

It localises to the endoplasmic reticulum. It is found in the golgi apparatus. Functionally, mannosyltransferase involved in O-glycosylation of cell wall and secreted proteins. Plays a major role in extending alpha-1,2-linked mannose in the O-glycan pathway. The chain is O-glycoside alpha-1,2-mannosyltransferase omh1 (omh1) from Schizosaccharomyces pombe (strain 972 / ATCC 24843) (Fission yeast).